An 89-amino-acid chain; its full sequence is Defensin-like protein 78 (89 aa).

Positions 1 to 30 are cleaved as a signal peptide; the sequence is MANNMVASPYKNTFMMIALVLILLISGSEA. 4 disulfide bridges follow: Cys40–Cys75, Cys44–Cys67, Cys52–Cys73, and Cys56–Cys74.

It belongs to the DEFL family.

It localises to the secreted. The sequence is that of Defensin-like protein 78 from Arabidopsis thaliana (Mouse-ear cress).